A 95-amino-acid chain; its full sequence is Enhancer of yellow 2 transcription factor (95 aa).

It belongs to the ENY2 family. In terms of assembly, component of the nuclear pore complex (NPC)-associated AMEX complex (anchoring and mRNA export complex), composed of at least e(y)2 and xmas-2. Component of the SAGA transcription coactivator-HAT complexes, at least composed of Ada2b, e(y)2, Pcaf/Gcn5, Taf10 and Nipped-A/Trrap. Within the SAGA complex, e(y)2, Sgf11, and not/nonstop form an additional subcomplex of SAGA called the DUB module (deubiquitination module). Component of the THO complex, composed of at least e(y)2, HPR1, THO2, THOC5, THOC6 and THOC7. Interacts with e(y)1. Interacts with su(Hw) (via zinc fingers). Interacts with xmas-2; required for localization to the nuclear periphery. Interacts with the nuclear pore complex (NPC).

It localises to the nucleus. It is found in the nucleoplasm. The protein resides in the cytoplasm. Functionally, involved in mRNA export coupled transcription activation by association with both the AMEX and the SAGA complexes. The SAGA complex is a multiprotein complex that activates transcription by remodeling chromatin and mediating histone acetylation and deubiquitination. Within the SAGA complex, participates in a subcomplex that specifically deubiquitinates histone H2B. The SAGA complex is recruited to specific gene promoters by activators, where it is required for transcription. Required for nuclear receptor-mediated transactivation. Involved in transcription elongation by recruiting the THO complex onto nascent mRNA. The AMEX complex functions in docking export-competent ribonucleoprotein particles (mRNPs) to the nuclear entrance of the nuclear pore complex (nuclear basket). AMEX participates in mRNA export and accurate chromatin positioning in the nucleus by tethering genes to the nuclear periphery. The sequence is that of Enhancer of yellow 2 transcription factor from Drosophila virilis (Fruit fly).